The following is a 442-amino-acid chain: GPI mannosyltransferase 1 (442 aa).

The next 8 helical transmembrane spans lie at 22–42 (INLTKSIFIVGLVIRLVLIVF), 95–115 (ILIHPAFGKLLFVICDMIIAY), 177–197 (LASIFYGLSVHFKIYPIIYSI), 242–262 (AFTFISLTFIMYLIYGYIFLF), 307–327 (MIVALASFLPQVILLLAITLV), 336–356 (LLLETITFVAFNKVCTVQYFI), 361–381 (ILPLVIPSSSLGLVQYIILFA), and 408–428 (IWVAGLLFFIANIYILVKLIL).

Belongs to the PIGM family.

It is found in the endoplasmic reticulum membrane. It functions in the pathway glycolipid biosynthesis; glycosylphosphatidylinositol-anchor biosynthesis. In terms of biological role, mannosyltransferase involved in glycosylphosphatidylinositol-anchor biosynthesis. Transfers the first alpha-1,4-mannose to GlcN-acyl-PI during GPI precursor assembly. The protein is GPI mannosyltransferase 1 (pigm) of Dictyostelium discoideum (Social amoeba).